Consider the following 207-residue polypeptide: LPS-assembly lipoprotein LptE (207 aa).

A signal peptide spans 1–19; that stretch reads MRHRILTLLLGLAVLVTAG. Cysteine 20 is lipidated: N-palmitoyl cysteine. The S-diacylglycerol cysteine moiety is linked to residue cysteine 20. The tract at residues 168–207 is disordered; sequence KNTQKNGDKPVSDANAAQGSTPTAVNETTLGEPAVSTSAK. Positions 182–207 are enriched in polar residues; the sequence is NAAQGSTPTAVNETTLGEPAVSTSAK.

The protein belongs to the LptE lipoprotein family. As to quaternary structure, component of the lipopolysaccharide transport and assembly complex. Interacts with LptD.

The protein resides in the cell outer membrane. Its function is as follows. Together with LptD, is involved in the assembly of lipopolysaccharide (LPS) at the surface of the outer membrane. Required for the proper assembly of LptD. Binds LPS and may serve as the LPS recognition site at the outer membrane. The protein is LPS-assembly lipoprotein LptE of Yersinia pseudotuberculosis serotype O:1b (strain IP 31758).